The chain runs to 181 residues: Peptidyl-tRNA hydrolase (181 aa).

TRNA is bound at residue tyrosine 14. Histidine 19 serves as the catalytic Proton acceptor. 3 residues coordinate tRNA: tyrosine 60, asparagine 62, and asparagine 108.

The protein belongs to the PTH family. Monomer.

Its subcellular location is the cytoplasm. It catalyses the reaction an N-acyl-L-alpha-aminoacyl-tRNA + H2O = an N-acyl-L-amino acid + a tRNA + H(+). Its function is as follows. Hydrolyzes ribosome-free peptidyl-tRNAs (with 1 or more amino acids incorporated), which drop off the ribosome during protein synthesis, or as a result of ribosome stalling. In terms of biological role, catalyzes the release of premature peptidyl moieties from peptidyl-tRNA molecules trapped in stalled 50S ribosomal subunits, and thus maintains levels of free tRNAs and 50S ribosomes. The sequence is that of Peptidyl-tRNA hydrolase from Metamycoplasma arthritidis (strain 158L3-1) (Mycoplasma arthritidis).